The following is a 640-amino-acid chain: MSRTLTPLLDRVCEPQDLRAFPESDLARLADELRAETIDVVSVTGGHLGAGLGVIELTVALHYVFNTPEDRIIWDVGHQAYPHKILTGRREKIRTLRQEGGLSGFTKRSESVYDPFGAGHSSTSISAGLGMAVASALKAEKRRNIVAVIGDGAMSAGMAYEAMNNAGALNARLIVVLNDNDMSIAPPTGAMSAHLARLVSRPAYRSLRERVKVLGEKLPKFFLDKARRSEEFARGFLVGGTLFEELGFYYVGPIDGHNLKHLLPVLKNVREYPTGPVLIHVVTHKGKGYAPAEASLDKYHGVNRFDIITGKQVKASSNVLPYTKVFSKALREEASYDDKIVAITAAMPTGTGLDFFAEKFPERMFDVGIAEQHAVTFAAGMACEGYKPFVAIYSTFLQRAYDQIIHDVSIQKLPVRFAIDRAGFVGADGATHAGSFDIVFLTTLPEFVVMAPSDEVELMHMVRTAAAYDQGPISFRYPRGEGIGMDLPQRGEILEIGKGRILHEGNRIALVCFGTRISEVLVAADELSAEGLSTTVADARFAKPLDKDLMRRLAREHEVLVTIEEGAIGGFGAHLLQFLAQEGLLEHGLKVRTLKLPDEYLNHGSQEKVLSRIGLDAVGIVNTVFSALGRKIRTVQRVRV.

Thiamine diphosphate-binding positions include His78 and 119 to 121 (GHS). Position 151 (Asp151) interacts with Mg(2+). Thiamine diphosphate contacts are provided by residues 152 to 153 (GA), Asn180, Tyr289, and Glu371. Asn180 provides a ligand contact to Mg(2+).

Belongs to the transketolase family. DXPS subfamily. In terms of assembly, homodimer. It depends on Mg(2+) as a cofactor. Thiamine diphosphate is required as a cofactor.

The catalysed reaction is D-glyceraldehyde 3-phosphate + pyruvate + H(+) = 1-deoxy-D-xylulose 5-phosphate + CO2. Its pathway is metabolic intermediate biosynthesis; 1-deoxy-D-xylulose 5-phosphate biosynthesis; 1-deoxy-D-xylulose 5-phosphate from D-glyceraldehyde 3-phosphate and pyruvate: step 1/1. In terms of biological role, catalyzes the acyloin condensation reaction between C atoms 2 and 3 of pyruvate and glyceraldehyde 3-phosphate to yield 1-deoxy-D-xylulose-5-phosphate (DXP). In Bartonella henselae (strain ATCC 49882 / DSM 28221 / CCUG 30454 / Houston 1) (Rochalimaea henselae), this protein is 1-deoxy-D-xylulose-5-phosphate synthase.